Reading from the N-terminus, the 142-residue chain is Hemoglobin subunit beta-2 (142 aa).

The region spanning 2-142 (SLTDEEKHLI…VTEALSCQYH (141 aa)) is the Globin domain. Residues His59 and His88 each coordinate heme b.

Belongs to the globin family. As to quaternary structure, heterotetramer of two alpha chains and two beta chains. Red blood cells.

Functionally, involved in oxygen transport from the lung to the various peripheral tissues. The chain is Hemoglobin subunit beta-2 (HBB2) from Torpedo marmorata (Marbled electric ray).